We begin with the raw amino-acid sequence, 496 residues long: Stomatal closure-related actin-binding protein 1 (496 aa).

Residues 126–269 (RNKDDVEEAI…FLQLQKKLAM (144 aa)) adopt a coiled-coil conformation.

Belongs to the SCAB family. In terms of assembly, dimer. Dimerization is required for actin-binding activity. Expressed in roots, stems, leaves, flowers, siliques and guard cells.

It is found in the cytoplasm. Its subcellular location is the cytoskeleton. Functionally, plant-specific actin binding protein that bundles and stabilizes microfilaments (MFs). Has no nucleation or capping activity. Regulates MF reorganization during stomatal closure. The binding to F-actin is insensitive to Ca(2+) and pH. Binds weakly to inositol phosphates. The protein is Stomatal closure-related actin-binding protein 1 of Arabidopsis thaliana (Mouse-ear cress).